Consider the following 252-residue polypeptide: 3-dehydroquinate dehydratase (252 aa).

Residues Ser21, 46 to 48 (EWR), and Arg82 contribute to the 3-dehydroquinate site. Residue His143 is the Proton donor/acceptor of the active site. The active-site Schiff-base intermediate with substrate is Lys170. 3-dehydroquinate contacts are provided by Arg213, Ser232, and Gln236.

The protein belongs to the type-I 3-dehydroquinase family. Homodimer.

The enzyme catalyses 3-dehydroquinate = 3-dehydroshikimate + H2O. It functions in the pathway metabolic intermediate biosynthesis; chorismate biosynthesis; chorismate from D-erythrose 4-phosphate and phosphoenolpyruvate: step 3/7. Functionally, involved in the third step of the chorismate pathway, which leads to the biosynthesis of aromatic amino acids. Catalyzes the cis-dehydration of 3-dehydroquinate (DHQ) and introduces the first double bond of the aromatic ring to yield 3-dehydroshikimate. In Shigella dysenteriae, this protein is 3-dehydroquinate dehydratase.